We begin with the raw amino-acid sequence, 305 residues long: Glycine--tRNA ligase alpha subunit (305 aa).

The protein belongs to the class-II aminoacyl-tRNA synthetase family. Tetramer of two alpha and two beta subunits.

The protein resides in the cytoplasm. It carries out the reaction tRNA(Gly) + glycine + ATP = glycyl-tRNA(Gly) + AMP + diphosphate. The chain is Glycine--tRNA ligase alpha subunit from Streptococcus pyogenes serotype M12 (strain MGAS2096).